Reading from the N-terminus, the 88-residue chain is Stannin (88 aa).

Residues 1-10 (MSIMDHSPTT) are Mitochondrial intermembrane-facing. Residues 11 to 31 (GVVTVIVILIAIAALGALILG) traverse the membrane as a helical segment. At 32–88 (CWCYLRLQRISQSEDEESIVGDGETKEPFLLVQYSAKGPCVERKAKLMTANSPEVHG) the chain is on the cytoplasmic side. Serine 49 and serine 83 each carry phosphoserine.

This sequence belongs to the stannin family. In terms of assembly, monomer.

The protein localises to the mitochondrion outer membrane. Functionally, plays a role in the toxic effects of organotins. Plays a role in endosomal maturation. This is Stannin (Snn) from Mus musculus (Mouse).